Reading from the N-terminus, the 526-residue chain is Peptide chain release factor 3 (526 aa).

The region spanning 9 to 277 (DLRRTFAIIS…GLTKWAPKPL (269 aa)) is the tr-type G domain. GTP is bound by residues 18-25 (SHPDAGKT), 86-90 (DTPGH), and 140-143 (NKMD).

This sequence belongs to the TRAFAC class translation factor GTPase superfamily. Classic translation factor GTPase family. PrfC subfamily.

Its subcellular location is the cytoplasm. In terms of biological role, increases the formation of ribosomal termination complexes and stimulates activities of RF-1 and RF-2. It binds guanine nucleotides and has strong preference for UGA stop codons. It may interact directly with the ribosome. The stimulation of RF-1 and RF-2 is significantly reduced by GTP and GDP, but not by GMP. The protein is Peptide chain release factor 3 of Colwellia psychrerythraea (strain 34H / ATCC BAA-681) (Vibrio psychroerythus).